Here is a 359-residue protein sequence, read N- to C-terminus: Replication-associated protein (359 aa).

One can recognise a CRESS-DNA virus Rep endonuclease domain in the interval 18-121 (RHRNANTFLT…PKDKWEKGTY (104 aa)). An RCR-1 motif is present at residues 25-28 (FLTY). Residues Glu59, His67, and His69 each contribute to the a divalent metal cation site. Positions 67-69 (HCH) match the RCR-2 motif. The active-site For DNA cleavage activity is the Tyr107. Residues 107–110 (YILK) carry the RCR-3 motif. Asp111 is an a divalent metal cation binding site. An oligomerization region spans residues 181–193 (SASRLFPDIAEPY). An ATP-binding site is contributed by 235 to 242 (GPTRTGKT). The tract at residues 258–276 (IDWSSYDEEAQYNVVDDIP) is transactivation. The short motif at 298 to 309 (KYGKRRKVASKS) is the Nuclear localization signal element.

The protein belongs to the geminiviridae Rep protein family. As to quaternary structure, homooligomer. Rep binds to repeated DNA motifs (iterons). Forms the O-complex, which is a Rep-DNA complex involved in the initiation of RCR. Part of the C- and V-complexes which are RepA-Rep-DNA complexes involved in the c-sense and v-sense transcription. It depends on Mg(2+) as a cofactor. The cofactor is Mn(2+).

The protein localises to the host nucleus. Essential for the replication of viral ssDNA. The closed circular ssDNA genome is first converted to a superhelical dsDNA. Rep binds a specific region at the genome origin of replication. It introduces an endonucleolytic nick within the conserved sequence 5'-TAATATTAC-3' in the intergenic region of the genome present in all geminiviruses, thereby initiating the rolling circle replication (RCR). Following cleavage, binds covalently to the 5'-phosphate of DNA as a tyrosyl ester. The cleavage gives rise to a free 3'-OH that serves as a primer for the cellular DNA polymerase. The polymerase synthesizes the (+) strand DNA by rolling circle mechanism. After one round of replication, a Rep-catalyzed nucleotidyl transfer reaction releases a circular single-stranded virus genome, thereby terminating the replication. Displays origin-specific DNA cleavage, nucleotidyl transferase, ATPase and helicase activities. Acts as an inhibitor of C-sense gene transcription. This chain is Replication-associated protein, found in Megathyrsus maximus (PanSV).